The chain runs to 199 residues: Golgi to ER traffic protein 1 (199 aa).

Topologically, residues 1-11 (MLLPDLHPYTI) are lumenal. A helical transmembrane segment spans residues 12–31 (LLSIFIVLLLKQLVASIGKS). The Cytoplasmic segment spans residues 32–115 (TIKEFVWLVY…SIDKVSNALL (84 aa)). A coiled-coil region spans residues 66-116 (EKRAISAQDEYAKWTKLNRQADKLSAELQKLNQEIQQQKASIDKVSNALLL). Residues 116-136 (LVLTTLPIWVARVLYRNTHLF) traverse the membrane as a helical segment. At 137-160 (YIRQGIFPKYVEWVLALPFLPNGA) the chain is on the lumenal side. The chain crosses the membrane as a helical span at residues 161–177 (VGLTIWMFAVNSVVSNF). At 178 to 199 (AFLVSFPFAKKVSKPVRDTKIE) the chain is on the cytoplasmic side.

It belongs to the WRB/GET1 family. In terms of assembly, component of the Golgi to ER traffic (GET) complex, which is composed of GET1, GET2 and GET3. Within the complex, GET1 and GET2 form a heterotetramer which is stabilized by phosphatidylinositol binding and which binds to the GET3 homodimer.

Its subcellular location is the endoplasmic reticulum membrane. It is found in the golgi apparatus membrane. Its function is as follows. Required for the post-translational delivery of tail-anchored (TA) proteins to the endoplasmic reticulum. Together with GET2, acts as a membrane receptor for soluble GET3, which recognizes and selectively binds the transmembrane domain of TA proteins in the cytosol. The GET complex cooperates with the HDEL receptor ERD2 to mediate the ATP-dependent retrieval of resident ER proteins that contain a C-terminal H-D-E-L retention signal from the Golgi to the ER. This is Golgi to ER traffic protein 1 from Candida dubliniensis (strain CD36 / ATCC MYA-646 / CBS 7987 / NCPF 3949 / NRRL Y-17841) (Yeast).